Consider the following 134-residue polypeptide: Small ribosomal subunit protein uS12 (134 aa).

The disordered stretch occupies residues M1–G26. Over residues R9–K20 the composition is skewed to basic residues. D89 bears the 3-methylthioaspartic acid mark. Residues D103–K134 form a disordered region. The span at S113 to K123 shows a compositional bias: basic residues. Positions A124 to K134 are enriched in low complexity.

The protein belongs to the universal ribosomal protein uS12 family. As to quaternary structure, part of the 30S ribosomal subunit. Contacts proteins S8 and S17. May interact with IF1 in the 30S initiation complex.

Functionally, with S4 and S5 plays an important role in translational accuracy. Interacts with and stabilizes bases of the 16S rRNA that are involved in tRNA selection in the A site and with the mRNA backbone. Located at the interface of the 30S and 50S subunits, it traverses the body of the 30S subunit contacting proteins on the other side and probably holding the rRNA structure together. The combined cluster of proteins S8, S12 and S17 appears to hold together the shoulder and platform of the 30S subunit. This Deinococcus geothermalis (strain DSM 11300 / CIP 105573 / AG-3a) protein is Small ribosomal subunit protein uS12.